The sequence spans 393 residues: uncharacterized protein (393 aa).

In terms of domain architecture, Flavodoxin-like spans 250-389 (AVIVYDTMYN…KCYEFGKRLA (140 aa)).

This is an uncharacterized protein from Methanocaldococcus jannaschii (strain ATCC 43067 / DSM 2661 / JAL-1 / JCM 10045 / NBRC 100440) (Methanococcus jannaschii).